A 401-amino-acid polypeptide reads, in one-letter code: Nodal homolog 3-B (401 aa).

An N-terminal signal peptide occupies residues 1-18 (MALLNLFFCLVFSSPLMA). Positions 19–274 (MPPVLQGRKS…KVNGFRRLRR (256 aa)) are excised as a propeptide. Residues N168, N337, N341, and N344 are each glycosylated (N-linked (GlcNAc...) asparagine). Cystine bridges form between C299–C365 and C328–C396.

The protein belongs to the TGF-beta family. Monomer. The propeptide region interacts with bmp4 in a non-covalent manner. Expressed in the dorsal marginal region of late blastula, becoming restricted to the dorsal blastopore lip (Spemann organizer) at the early gastrula stage.

The protein resides in the secreted. Exhibits mesoderm-dorsalizing activity and neural-inducing activity, but lacks mesoderm-inducing activity. Regulates the expression of specific mesodermal and neural genes. Induces convergent extension movements at the embryonic midline by activating the fgf signaling pathway to induce t/bra expression in the organizer region. Acts with wnt11 to induce Spemann organizer cells and induce axis formation. The unprocessed protein antagonizes bmp-signaling. The chain is Nodal homolog 3-B (nodal3-b) from Xenopus laevis (African clawed frog).